A 266-amino-acid polypeptide reads, in one-letter code: Hemin import ATP-binding protein HmuV (266 aa).

Residues 12–248 (LEASHLHYHV…ETLTQWYQAD (237 aa)) enclose the ABC transporter domain. 44-51 (GPNGAGKS) serves as a coordination point for ATP.

This sequence belongs to the ABC transporter superfamily. Heme (hemin) importer (TC 3.A.1.14.5) family. The complex is composed of two ATP-binding proteins (HmuV), two transmembrane proteins (HmuU) and a solute-binding protein (HmuT).

It localises to the cell inner membrane. Its function is as follows. Part of the ABC transporter complex HmuTUV involved in hemin import. Responsible for energy coupling to the transport system. The sequence is that of Hemin import ATP-binding protein HmuV from Yersinia pestis bv. Antiqua (strain Antiqua).